The chain runs to 207 residues: Large ribosomal subunit protein uL4 (207 aa).

The tract at residues 48-70 is disordered; sequence KAQKTRSEVSGGGAKPWRQKGTG.

This sequence belongs to the universal ribosomal protein uL4 family. As to quaternary structure, part of the 50S ribosomal subunit.

One of the primary rRNA binding proteins, this protein initially binds near the 5'-end of the 23S rRNA. It is important during the early stages of 50S assembly. It makes multiple contacts with different domains of the 23S rRNA in the assembled 50S subunit and ribosome. In terms of biological role, forms part of the polypeptide exit tunnel. In Francisella tularensis subsp. holarctica (strain FTNF002-00 / FTA), this protein is Large ribosomal subunit protein uL4.